Consider the following 172-residue polypeptide: Protein 3 (172 aa).

In Northern cereal mosaic virus (NCMV), this protein is Protein 3 (3).